Here is a 334-residue protein sequence, read N- to C-terminus: Small ribosomal subunit protein uS2 (334 aa).

Belongs to the universal ribosomal protein uS2 family.

The sequence is that of Small ribosomal subunit protein uS2 from Rhodopseudomonas palustris (strain BisB18).